The following is a 303-amino-acid chain: Probable 5-dehydro-4-deoxyglucarate dehydratase (303 aa).

Belongs to the DapA family.

It carries out the reaction 5-dehydro-4-deoxy-D-glucarate + H(+) = 2,5-dioxopentanoate + CO2 + H2O. Its pathway is carbohydrate acid metabolism; D-glucarate degradation; 2,5-dioxopentanoate from D-glucarate: step 2/2. In Acidovorax ebreus (strain TPSY) (Diaphorobacter sp. (strain TPSY)), this protein is Probable 5-dehydro-4-deoxyglucarate dehydratase.